The sequence spans 343 residues: MLVKEFDYHLPEELIARYPAPERDGSRLMLLNRESGTIGHGLFRDIADHLRPGDLLVLNDTRVIPARLFGRKATGGRVEIFLVRRQETQAERWSCLMRSSKGMRPGQLITLAGAMTALVVERLEPEGWLLEFQGAEPFSVWLEREGEMPLPPYLQRPAESGDQLRYQTVFARSAGAVAAPTAGLHFTPELLERLAERGVATACLTLHTGPGTFQPLRVERVQDHRIHSERYHISAETCQAIAETKQRGGRVVAVGTTSARTLEYAADEKGGLCPGSGDADIFIYPGYRFRVVDALVTNFHLPESTLIMLVSAFAGKEYVFHAYHEAARLGYRFYSYGDAMFIE.

Belongs to the QueA family. In terms of assembly, monomer.

The protein resides in the cytoplasm. It carries out the reaction 7-aminomethyl-7-carbaguanosine(34) in tRNA + S-adenosyl-L-methionine = epoxyqueuosine(34) in tRNA + adenine + L-methionine + 2 H(+). Its pathway is tRNA modification; tRNA-queuosine biosynthesis. Its function is as follows. Transfers and isomerizes the ribose moiety from AdoMet to the 7-aminomethyl group of 7-deazaguanine (preQ1-tRNA) to give epoxyqueuosine (oQ-tRNA). In Pelobacter propionicus (strain DSM 2379 / NBRC 103807 / OttBd1), this protein is S-adenosylmethionine:tRNA ribosyltransferase-isomerase.